Reading from the N-terminus, the 289-residue chain is MSLILPLEKPALNLRPLLWLLLPLLALATLFFWPLSLIVEQALRGANGEIGLETFRQVVDSKRFVGALLNTLQIAFFATAGCLLLGSVMSLILVFIPFPGSELIGRVVDTFIALPTFLITLAFTFIYGSAGLLNGALMSLFAFELPPVDFLYSMQGVILAEITVFTPLVMRPLMAALRQIDKSQLEAASILGAHPLRVIGQVIFPAALPALMASGSLCLLLTTNEFGIVLFIGAKGVNTLPMMVYSKAILESDYTVACMIALINIVLSLGLFSLYRLAASRTGVRSQPC.

Transmembrane regions (helical) follow at residues 19–39, 76–96, 111–131, 150–170, 202–222, and 254–274; these read WLLL…SLIV, FFAT…LVFI, FIAL…GSAG, FLYS…PLVM, VIFP…LLLT, and YTVA…LFSL. The ABC transmembrane type-1 domain maps to 68–275; that stretch reads LLNTLQIAFF…VLSLGLFSLY (208 aa).

The protein belongs to the binding-protein-dependent transport system permease family.

It localises to the cell inner membrane. Probably part of the PhnSTUV complex (TC 3.A.1.11.5) involved in 2-aminoethylphosphonate import. Probably responsible for the translocation of the substrate across the membrane. This Salmonella typhi protein is Putative 2-aminoethylphosphonate transport system permease protein PhnU (phnU).